The chain runs to 87 residues: Small ribosomal subunit protein eS21 (87 aa).

The protein belongs to the eukaryotic ribosomal protein eS21 family. Component of the small ribosomal subunit. Mature ribosomes consist of a small (40S) and a large (60S) subunit. The 40S subunit contains about 33 different proteins and 1 molecule of RNA (18S). The 60S subunit contains about 49 different proteins and 3 molecules of RNA (25S, 5.8S and 5S).

The protein localises to the cytoplasm. Functionally, required for the processing of the 20S rRNA-precursor to mature 18S rRNA in a late step of the maturation of 40S ribosomal subunits. Has a physiological role leading to 18S rRNA stability. This Kluyveromyces lactis (strain ATCC 8585 / CBS 2359 / DSM 70799 / NBRC 1267 / NRRL Y-1140 / WM37) (Yeast) protein is Small ribosomal subunit protein eS21 (RPS21).